The sequence spans 422 residues: Tk-subtilisin (422 aa).

The signal sequence occupies residues 1–24 (MKKSIALVLSIVLLAALFAVPASA). The propeptide occupies 25–106 (GEQNTIRVIV…SWLGGGSTQP (82 aa)). The Peptidase S8 domain occupies 111–417 (PWGIERVKAP…YGVVRAALAV (307 aa)). Active-site charge relay system residues include Asp-139, His-177, and Ser-348.

Belongs to the peptidase S8 family. As to quaternary structure, monomer. Requires Ca(2+) as cofactor.

It is found in the secreted. Functionally, has a broad substrate specificity with a slight preference to large hydrophobic amino acid residues at the P1 position. The protein is Tk-subtilisin of Thermococcus kodakarensis (strain ATCC BAA-918 / JCM 12380 / KOD1) (Pyrococcus kodakaraensis (strain KOD1)).